Reading from the N-terminus, the 134-residue chain is Small ribosomal subunit protein uS11 (134 aa).

The protein belongs to the universal ribosomal protein uS11 family. Part of the 30S ribosomal subunit. Interacts with proteins S7 and S18. Binds to IF-3.

Functionally, located on the platform of the 30S subunit, it bridges several disparate RNA helices of the 16S rRNA. Forms part of the Shine-Dalgarno cleft in the 70S ribosome. The chain is Small ribosomal subunit protein uS11 from Paracidovorax citrulli (strain AAC00-1) (Acidovorax citrulli).